The chain runs to 80 residues: Three-finger toxin MALT0059C (80 aa).

The signal sequence occupies residues 1 to 21 (MRTLLLTLVVVTIVCLDLGNS). 4 disulfides stabilise this stretch: Cys24–Cys41, Cys35–Cys60, Cys64–Cys72, and Cys73–Cys78.

Belongs to the three-finger toxin family. Short-chain subfamily. In terms of tissue distribution, expressed by the venom gland.

Its subcellular location is the secreted. In terms of biological role, neurotoxin. Blocks muscular nicotinic acetylcholine receptors (nAChR). This is Three-finger toxin MALT0059C from Micrurus altirostris (Uruguayan coral snake).